The sequence spans 330 residues: Putative UV-damage endonuclease (330 aa).

It belongs to the uve1/UvsE family.

It is found in the virion. In terms of biological role, endonuclease for the repair of UV-irradiated DNA. In Acanthamoeba polyphaga mimivirus (APMV), this protein is Putative UV-damage endonuclease.